Here is a 312-residue protein sequence, read N- to C-terminus: Pantothenate kinase (312 aa).

97–104 provides a ligand contact to ATP; it reads GSVAVGKS.

It belongs to the prokaryotic pantothenate kinase family.

It is found in the cytoplasm. The catalysed reaction is (R)-pantothenate + ATP = (R)-4'-phosphopantothenate + ADP + H(+). The protein operates within cofactor biosynthesis; coenzyme A biosynthesis; CoA from (R)-pantothenate: step 1/5. The protein is Pantothenate kinase (coaA) of Mycobacterium leprae (strain TN).